A 66-amino-acid chain; its full sequence is UPF0370 protein YpfN (66 aa).

The helical transmembrane segment at 4-24 (LAKYWWILVLVFLVGVLLNVI) threads the bilayer. Residues 39 to 66 (KPELPPHRDFNDKWDDEDDWPKKDQPKK) form a disordered region. The segment covering 42 to 51 (LPPHRDFNDK) has biased composition (basic and acidic residues).

The protein belongs to the UPF0370 family.

It is found in the cell membrane. This chain is UPF0370 protein YpfN, found in Salmonella paratyphi C (strain RKS4594).